The following is an 87-amino-acid chain: Elongation factor Ts, chloroplastic (87 aa).

This sequence belongs to the EF-Ts family.

The protein resides in the plastid. It localises to the chloroplast. Functionally, associates with the EF-Tu.GDP complex and induces the exchange of GDP to GTP. It remains bound to the aminoacyl-tRNA.EF-Tu.GTP complex up to the GTP hydrolysis stage on the ribosome. The chain is Elongation factor Ts, chloroplastic (tsf) from Antithamnion sp. (Red alga).